A 513-amino-acid polypeptide reads, in one-letter code: Maturase K (513 aa).

Belongs to the intron maturase 2 family. MatK subfamily.

It is found in the plastid. The protein localises to the chloroplast. Functionally, usually encoded in the trnK tRNA gene intron. Probably assists in splicing its own and other chloroplast group II introns. This is Maturase K from Sporobolus indicus (Smut grass).